A 367-amino-acid polypeptide reads, in one-letter code: Coiled-coil domain-containing protein 34 (367 aa).

Residue serine 55 is modified to Phosphoserine. Disordered regions lie at residues 77–105 (FPFG…KVES), 191–228 (QKKN…KAKE), and 310–349 (YNPI…SSLA). Residues 82-97 (DDSEGEDEEALDEDAR) are compositionally biased toward acidic residues. 2 coiled-coil regions span residues 87–108 (EDEE…SLEG) and 153–280 (RLQQ…AKNK). Residues 197–228 (ERKEREQKINKEMEEKEAKKREKEHLQEKAKE) are compositionally biased toward basic and acidic residues. The span at 339-349 (ASQPLPSSSLA) shows a compositional bias: low complexity.

Expressed in testis and sperm.

The protein localises to the cell projection. It is found in the cilium. Its subcellular location is the flagellum. Functionally, involved in spermatogenesis. Has a probable role in anterograde intraflagellar transport which is essential for the formation of sperm flagella. The polypeptide is Coiled-coil domain-containing protein 34 (Ccdc34) (Mus musculus (Mouse)).